Consider the following 321-residue polypeptide: Phospho-N-acetylmuramoyl-pentapeptide-transferase (321 aa).

10 helical membrane-spanning segments follow: residues 1-21, 50-70, 76-96, 112-132, 140-160, 176-196, 200-220, 225-245, 250-270, and 300-320; these read MIFV…PVLI, MGGL…IIFV, IILL…DDYI, FLAQ…FHLV, IPFT…IVFW, GLAT…SFVL, AIGI…PYNI, VFMG…ISIM, LSLI…MLQV, and VVTV…WIGV.

Belongs to the glycosyltransferase 4 family. MraY subfamily. Mg(2+) serves as cofactor.

Its subcellular location is the cell membrane. It carries out the reaction UDP-N-acetyl-alpha-D-muramoyl-L-alanyl-gamma-D-glutamyl-L-lysyl-D-alanyl-D-alanine + di-trans,octa-cis-undecaprenyl phosphate = Mur2Ac(oyl-L-Ala-gamma-D-Glu-L-Lys-D-Ala-D-Ala)-di-trans,octa-cis-undecaprenyl diphosphate + UMP. It functions in the pathway cell wall biogenesis; peptidoglycan biosynthesis. Catalyzes the initial step of the lipid cycle reactions in the biosynthesis of the cell wall peptidoglycan: transfers peptidoglycan precursor phospho-MurNAc-pentapeptide from UDP-MurNAc-pentapeptide onto the lipid carrier undecaprenyl phosphate, yielding undecaprenyl-pyrophosphoryl-MurNAc-pentapeptide, known as lipid I. The polypeptide is Phospho-N-acetylmuramoyl-pentapeptide-transferase (Staphylococcus aureus (strain Mu50 / ATCC 700699)).